A 106-amino-acid polypeptide reads, in one-letter code: MVEENKIVKKVIVTKKPTIKKAPVKAAFKKEVVVKNATVIKKTQTSSKRNTVNITLVKSFHGRLPSHRATIVGLGLKRINHIKELKDTPEIRGMINKVAYLLKVED.

The protein belongs to the universal ribosomal protein uL30 family. As to quaternary structure, part of the 50S ribosomal subunit.

The protein is Large ribosomal subunit protein uL30 of Ruthia magnifica subsp. Calyptogena magnifica.